The primary structure comprises 465 residues: Probable tRNA modification GTPase MnmE (465 aa).

Arg-23, Glu-85, and Arg-124 together coordinate (6S)-5-formyl-5,6,7,8-tetrahydrofolate. Residues 221-384 (GTKVCIIGKP…LNNCILDLSS (164 aa)) enclose the TrmE-type G domain. GTP-binding positions include 231–236 (NVGKSS), 250–256 (TNFPGTT), and 275–278 (DTAG). Positions 235 and 256 each coordinate Mg(2+). A (6S)-5-formyl-5,6,7,8-tetrahydrofolate-binding site is contributed by Lys-465.

The protein belongs to the TRAFAC class TrmE-Era-EngA-EngB-Septin-like GTPase superfamily. TrmE GTPase family. It depends on K(+) as a cofactor.

The protein resides in the plastid. It is found in the chloroplast. Functionally, exhibits a very high intrinsic GTPase hydrolysis rate. Involved in the addition of a carboxymethylaminomethyl (cmnm) group at the wobble position (U34) of certain tRNAs, forming tRNA-cmnm(5)s(2)U34. The chain is Probable tRNA modification GTPase MnmE from Cyanidium caldarium (Red alga).